A 369-amino-acid chain; its full sequence is Lipoyl synthase, mitochondrial (369 aa).

A mitochondrion-targeting transit peptide spans 1–32; sequence MLTKGVRALAWSPRRYITLDAEAAKPVVAKRR. 7 residues coordinate [4Fe-4S] cluster: Cys106, Cys111, Cys117, Cys136, Cys140, Cys143, and Ser351. One can recognise a Radical SAM core domain in the interval 121–340; it reads NKGSATATIM…KEKALELGFL (220 aa).

It belongs to the radical SAM superfamily. Lipoyl synthase family. The cofactor is [4Fe-4S] cluster.

The protein localises to the mitochondrion. It carries out the reaction [[Fe-S] cluster scaffold protein carrying a second [4Fe-4S](2+) cluster] + N(6)-octanoyl-L-lysyl-[protein] + 2 oxidized [2Fe-2S]-[ferredoxin] + 2 S-adenosyl-L-methionine + 4 H(+) = [[Fe-S] cluster scaffold protein] + N(6)-[(R)-dihydrolipoyl]-L-lysyl-[protein] + 4 Fe(3+) + 2 hydrogen sulfide + 2 5'-deoxyadenosine + 2 L-methionine + 2 reduced [2Fe-2S]-[ferredoxin]. Its pathway is protein modification; protein lipoylation via endogenous pathway; protein N(6)-(lipoyl)lysine from octanoyl-[acyl-carrier-protein]: step 2/2. Its function is as follows. Catalyzes the radical-mediated insertion of two sulfur atoms into the C-6 and C-8 positions of the octanoyl moiety bound to the lipoyl domains of lipoate-dependent enzymes, thereby converting the octanoylated domains into lipoylated derivatives. In Eremothecium gossypii (strain ATCC 10895 / CBS 109.51 / FGSC 9923 / NRRL Y-1056) (Yeast), this protein is Lipoyl synthase, mitochondrial.